A 341-amino-acid polypeptide reads, in one-letter code: Uroporphyrinogen decarboxylase (341 aa).

Substrate is bound by residues 23–27, D73, Y148, S203, and H318; that span reads RQAGR.

Belongs to the uroporphyrinogen decarboxylase family. Homodimer.

Its subcellular location is the cytoplasm. The enzyme catalyses uroporphyrinogen III + 4 H(+) = coproporphyrinogen III + 4 CO2. Its pathway is porphyrin-containing compound metabolism; protoporphyrin-IX biosynthesis; coproporphyrinogen-III from 5-aminolevulinate: step 4/4. Catalyzes the decarboxylation of four acetate groups of uroporphyrinogen-III to yield coproporphyrinogen-III. This is Uroporphyrinogen decarboxylase from Brucella suis (strain ATCC 23445 / NCTC 10510).